The sequence spans 473 residues: 3-isopropylmalate dehydratase large subunit (473 aa).

Cys-348, Cys-408, and Cys-411 together coordinate [4Fe-4S] cluster. The disordered stretch occupies residues 421 to 440; that stretch reads GDEASASSSNRNFIGRQGSK.

This sequence belongs to the aconitase/IPM isomerase family. LeuC type 1 subfamily. In terms of assembly, heterodimer of LeuC and LeuD. The cofactor is [4Fe-4S] cluster.

It catalyses the reaction (2R,3S)-3-isopropylmalate = (2S)-2-isopropylmalate. The protein operates within amino-acid biosynthesis; L-leucine biosynthesis; L-leucine from 3-methyl-2-oxobutanoate: step 2/4. Catalyzes the isomerization between 2-isopropylmalate and 3-isopropylmalate, via the formation of 2-isopropylmaleate. This chain is 3-isopropylmalate dehydratase large subunit, found in Haloferax volcanii (strain ATCC 29605 / DSM 3757 / JCM 8879 / NBRC 14742 / NCIMB 2012 / VKM B-1768 / DS2) (Halobacterium volcanii).